The primary structure comprises 923 residues: Isoleucine--tRNA ligase (923 aa).

Positions 57–67 (PYANGDIHMGH) match the 'HIGH' region motif. Residue E553 coordinates L-isoleucyl-5'-AMP. A 'KMSKS' region motif is present at residues 594-598 (KMSKS). K597 lines the ATP pocket. Positions 888, 891, 908, and 911 each coordinate Zn(2+).

It belongs to the class-I aminoacyl-tRNA synthetase family. IleS type 1 subfamily. In terms of assembly, monomer. Requires Zn(2+) as cofactor.

The protein localises to the cytoplasm. It catalyses the reaction tRNA(Ile) + L-isoleucine + ATP = L-isoleucyl-tRNA(Ile) + AMP + diphosphate. Functionally, catalyzes the attachment of isoleucine to tRNA(Ile). As IleRS can inadvertently accommodate and process structurally similar amino acids such as valine, to avoid such errors it has two additional distinct tRNA(Ile)-dependent editing activities. One activity is designated as 'pretransfer' editing and involves the hydrolysis of activated Val-AMP. The other activity is designated 'posttransfer' editing and involves deacylation of mischarged Val-tRNA(Ile). This chain is Isoleucine--tRNA ligase, found in Shouchella clausii (strain KSM-K16) (Alkalihalobacillus clausii).